The chain runs to 111 residues: MFKATARYIRVQPRKARLAAGLMRNRSVVEAQQQLSFSQMKAGRCLKKVLDGAIANAESNENIKRENLCVLEVRVDVGPMFKRMKSKSRGGRAPILKRTSHLTVIVGERGQ.

Belongs to the universal ribosomal protein uL22 family. Part of the 50S ribosomal subunit.

Its function is as follows. This protein binds specifically to 23S rRNA; its binding is stimulated by other ribosomal proteins, e.g. L4, L17, and L20. It is important during the early stages of 50S assembly. It makes multiple contacts with different domains of the 23S rRNA in the assembled 50S subunit and ribosome. The globular domain of the protein is located near the polypeptide exit tunnel on the outside of the subunit, while an extended beta-hairpin is found that lines the wall of the exit tunnel in the center of the 70S ribosome. The sequence is that of Large ribosomal subunit protein uL22 from Chlamydia trachomatis serovar A (strain ATCC VR-571B / DSM 19440 / HAR-13).